The chain runs to 417 residues: Protein FAM181B (417 aa).

The interval 104 to 147 (CSGLMGTAPPRPASPSAADAPAKRPPGAPTVATPAHCKAAPRRE) is disordered.

The protein belongs to the FAM181 family.

This is Protein FAM181B (Fam181b) from Mus musculus (Mouse).